Consider the following 190-residue polypeptide: MISFQIILQQRLRSLRFGKRCKSKRTLKSNSTAVGSSDEDDEIYVPKKPIPSPIDQSKVEEPPVFTKALITHLERLSLVRFSDEQAVLNLKQAVRFANQLKLIDTTGIKPLETLLEDIPCPLREDVPGDPMTKAEVLMNATKVVEDYFVTPPGNIPLEESDKLDLMKIEDDAQKEMSKKTLLKDSVKKTE.

The N-terminal 96 residues, Met1 to Phe96, are a transit peptide targeting the mitochondrion. The interval Lys28–Ser57 is disordered.

This sequence belongs to the GatC family. As to quaternary structure, subunit of the heterotrimeric GatCAB amidotransferase (AdT) complex, composed of A, B and C subunits.

It localises to the mitochondrion. It carries out the reaction L-glutamyl-tRNA(Gln) + L-glutamine + ATP + H2O = L-glutaminyl-tRNA(Gln) + L-glutamate + ADP + phosphate + H(+). Its function is as follows. Allows the formation of correctly charged Gln-tRNA(Gln) through the transamidation of misacylated Glu-tRNA(Gln) in the mitochondria. The reaction takes place in the presence of glutamine and ATP through an activated gamma-phospho-Glu-tRNA(Gln). In Loa loa (Eye worm), this protein is Glutamyl-tRNA(Gln) amidotransferase subunit C, mitochondrial.